The sequence spans 715 residues: Putative macrophage stimulating 1-like protein (715 aa).

An N-terminal signal peptide occupies residues 1–20 (MAPAPVTLLAPGAASSMSCS). The 90-residue stretch at 21 to 110 (QPGQRSPSND…GRCDLFQEKG (90 aa)) folds into the PAN domain. 4 Kringle domains span residues 63-156 (GRCG…IKSC), 160-238 (ACVW…LPRC), 252-345 (SCFR…IRRC), and 353-464 (DCYH…LRRC). Disulfide bonds link C127-C151, C161-C238, C182-C221, C210-C233, C253-C345, C316-C339, C354-C464, C375-C447, C511-C527, C606-C671, C636-C650, and C661-C689. In terms of domain architecture, Peptidase S1 spans 488–713 (VAGGHPGNSP…FVDWIHKVMR (226 aa)).

Belongs to the peptidase S1 family. Plasminogen subfamily.

The protein localises to the secreted. This is Putative macrophage stimulating 1-like protein (MST1L) from Homo sapiens (Human).